A 102-amino-acid polypeptide reads, in one-letter code: MLCAIYKSKKKEGMYLYVAKRDYFDEVPETLKMAFGTPNFVMLFNLLGEKKLVRAENQEVLKHIQEQGFYLQMPPKQESLFEQFKAEQKAKQTKNKTALKVR.

Residues methionine 1–lysine 85 form the YcgL domain.

The protein is YcgL domain-containing protein MS1047 of Mannheimia succiniciproducens (strain KCTC 0769BP / MBEL55E).